The primary structure comprises 298 residues: Probable endonuclease 4 (298 aa).

Zn(2+) contacts are provided by His69, His110, Glu145, Asp179, His182, His214, Asp227, His229, and Glu259.

This sequence belongs to the AP endonuclease 2 family. The cofactor is Zn(2+).

The catalysed reaction is Endonucleolytic cleavage to 5'-phosphooligonucleotide end-products.. Its function is as follows. Endonuclease IV plays a role in DNA repair. It cleaves phosphodiester bonds at apurinic or apyrimidinic (AP) sites, generating a 3'-hydroxyl group and a 5'-terminal sugar phosphate. The polypeptide is Probable endonuclease 4 (Geobacillus sp. (strain WCH70)).